A 76-amino-acid polypeptide reads, in one-letter code: Exodeoxyribonuclease 7 small subunit (76 aa).

Belongs to the XseB family. In terms of assembly, heterooligomer composed of large and small subunits.

It is found in the cytoplasm. The catalysed reaction is Exonucleolytic cleavage in either 5'- to 3'- or 3'- to 5'-direction to yield nucleoside 5'-phosphates.. In terms of biological role, bidirectionally degrades single-stranded DNA into large acid-insoluble oligonucleotides, which are then degraded further into small acid-soluble oligonucleotides. This Lactiplantibacillus plantarum (strain ATCC BAA-793 / NCIMB 8826 / WCFS1) (Lactobacillus plantarum) protein is Exodeoxyribonuclease 7 small subunit.